The chain runs to 669 residues: UvrABC system protein B (669 aa).

Residues 26 to 414 form the Helicase ATP-binding domain; the sequence is EGLEDGLAHQ…SGDVVEQVVR (389 aa). 39–46 contacts ATP; the sequence is GVTGSGKT. The Beta-hairpin motif lies at 92–115; sequence YYDYYQPEAYVPSSDTFIEKDASV. In terms of domain architecture, Helicase C-terminal spans 431–597; the sequence is QVDDLLSEIR…GLNKKINDIL (167 aa). A UVR domain is found at 629–664; the sequence is ESKIRELEAKMYQHAQDLEFEQAASVRDQVQALREQ.

Belongs to the UvrB family. Forms a heterotetramer with UvrA during the search for lesions. Interacts with UvrC in an incision complex.

The protein localises to the cytoplasm. In terms of biological role, the UvrABC repair system catalyzes the recognition and processing of DNA lesions. A damage recognition complex composed of 2 UvrA and 2 UvrB subunits scans DNA for abnormalities. Upon binding of the UvrA(2)B(2) complex to a putative damaged site, the DNA wraps around one UvrB monomer. DNA wrap is dependent on ATP binding by UvrB and probably causes local melting of the DNA helix, facilitating insertion of UvrB beta-hairpin between the DNA strands. Then UvrB probes one DNA strand for the presence of a lesion. If a lesion is found the UvrA subunits dissociate and the UvrB-DNA preincision complex is formed. This complex is subsequently bound by UvrC and the second UvrB is released. If no lesion is found, the DNA wraps around the other UvrB subunit that will check the other stand for damage. In Photorhabdus laumondii subsp. laumondii (strain DSM 15139 / CIP 105565 / TT01) (Photorhabdus luminescens subsp. laumondii), this protein is UvrABC system protein B.